We begin with the raw amino-acid sequence, 540 residues long: Cobalt-factor III methyltransferase (540 aa).

Cys402, Cys405, Cys439, and Cys443 together coordinate [4Fe-4S] cluster.

In the N-terminal section; belongs to the precorrin methyltransferase family. It depends on [4Fe-4S] cluster as a cofactor.

It catalyses the reaction Co(II)-factor III + AH2 + S-adenosyl-L-methionine = Co-precorrin-4 + A + S-adenosyl-L-homocysteine. It functions in the pathway cofactor biosynthesis; adenosylcobalamin biosynthesis. In terms of biological role, methyltransferase that catalyzes the reduction, ring contraction and methylation of C-17 in cobalt-factor III to form cobalt-precorrin-4. Is also able to convert cobalt-precorrin-3 to cobalt-precorrin-4. This is Cobalt-factor III methyltransferase (cbiH60) from Priestia megaterium (Bacillus megaterium).